Reading from the N-terminus, the 343-residue chain is GDSL esterase/lipase EXL6 (343 aa).

Positions 1-21 are cleaved as a signal peptide; sequence MFRGKIFVLSLFSIYVLSSAA. The N-linked (GlcNAc...) asparagine glycan is linked to Asn-24. Ser-36 functions as the Nucleophile in the catalytic mechanism. Catalysis depends on residues Asp-318 and His-321.

This sequence belongs to the 'GDSL' lipolytic enzyme family. Flower buds and pollen.

It is found in the secreted. The protein localises to the extracellular space. It localises to the extracellular matrix. Its subcellular location is the pollen coat. In terms of biological role, required for the formation of pollen coats and male fertility. The chain is GDSL esterase/lipase EXL6 (EXL6) from Arabidopsis thaliana (Mouse-ear cress).